A 359-amino-acid chain; its full sequence is Probable dual-specificity RNA methyltransferase RlmN (359 aa).

Catalysis depends on Glu-100, which acts as the Proton acceptor. In terms of domain architecture, Radical SAM core spans 106-340 (TDKRLTVCVS…VSVRASRGRD (235 aa)). The cysteines at positions 113 and 345 are disulfide-linked. Residues Cys-120, Cys-124, and Cys-127 each coordinate [4Fe-4S] cluster. S-adenosyl-L-methionine-binding positions include 167–168 (GE), Ser-197, 226–228 (SLH), and Asn-302. Cys-345 serves as the catalytic S-methylcysteine intermediate.

It belongs to the radical SAM superfamily. RlmN family. The cofactor is [4Fe-4S] cluster.

Its subcellular location is the cytoplasm. The enzyme catalyses adenosine(2503) in 23S rRNA + 2 reduced [2Fe-2S]-[ferredoxin] + 2 S-adenosyl-L-methionine = 2-methyladenosine(2503) in 23S rRNA + 5'-deoxyadenosine + L-methionine + 2 oxidized [2Fe-2S]-[ferredoxin] + S-adenosyl-L-homocysteine. It catalyses the reaction adenosine(37) in tRNA + 2 reduced [2Fe-2S]-[ferredoxin] + 2 S-adenosyl-L-methionine = 2-methyladenosine(37) in tRNA + 5'-deoxyadenosine + L-methionine + 2 oxidized [2Fe-2S]-[ferredoxin] + S-adenosyl-L-homocysteine. Its function is as follows. Specifically methylates position 2 of adenine 2503 in 23S rRNA and position 2 of adenine 37 in tRNAs. This chain is Probable dual-specificity RNA methyltransferase RlmN, found in Prochlorococcus marinus (strain NATL1A).